Reading from the N-terminus, the 399-residue chain is Methylthioribose kinase (399 aa).

ATP is bound by residues N40, K57, and 111 to 113 (EDL). D229 is a substrate binding site. Residue 246–248 (DAE) coordinates ATP. R344 is a substrate binding site.

The protein belongs to the methylthioribose kinase family. Homodimer.

The enzyme catalyses 5-(methylsulfanyl)-D-ribose + ATP = 5-(methylsulfanyl)-alpha-D-ribose 1-phosphate + ADP + H(+). It functions in the pathway amino-acid biosynthesis; L-methionine biosynthesis via salvage pathway; S-methyl-5-thio-alpha-D-ribose 1-phosphate from S-methyl-5'-thioadenosine (hydrolase route): step 2/2. Functionally, catalyzes the phosphorylation of methylthioribose into methylthioribose-1-phosphate. This chain is Methylthioribose kinase, found in Klebsiella pneumoniae (strain 342).